The sequence spans 313 residues: Olfactory receptor 1M1 (313 aa).

Over 1–25 (MEPRNQTSASQFILLGLSEKPEQET) the chain is Extracellular. N-linked (GlcNAc...) asparagine glycosylation occurs at N5. A helical transmembrane segment spans residues 26–49 (LLFSLFFCMYLVMVVGNLLIILAI). Residues 50 to 57 (SIDSHLHT) are Cytoplasmic-facing. The helical transmembrane segment at 58–79 (PMYFFLANLSLVDFCLATNTIP) threads the bilayer. The Extracellular segment spans residues 80 to 100 (KMLVSLQTGSKAISYPCCLIQ). C97 and C189 are oxidised to a cystine. A helical transmembrane segment spans residues 101 to 120 (MYFFHFFGIVDSVIIAMMAY). The Cytoplasmic portion of the chain corresponds to 121 to 139 (DRFVAICHPLHYAKIMSLR). Residues 140–158 (LCRLLVGALWAFSCFISLT) form a helical membrane-spanning segment. The Extracellular portion of the chain corresponds to 159 to 196 (HILLMARLVFCGSHEVPHYFCDLTPILRLSCTDTSVNR). The helical transmembrane segment at 197-219 (IFILIVAGMVIATPFVCILASYA) threads the bilayer. The Cytoplasmic portion of the chain corresponds to 220 to 236 (RILVAIMKVPSAGGRKK). Residues 237-259 (AFSTCSSHLSVVALFYGTTIGVY) form a helical membrane-spanning segment. The Extracellular segment spans residues 260–272 (LCPSSVLTTVKEK). Residues 273 to 292 (ASAVMYTAVTPMLNPFIYSL) traverse the membrane as a helical segment. Topologically, residues 293–313 (RNRDLKGALRKLVNRKITSSS) are cytoplasmic.

The protein belongs to the G-protein coupled receptor 1 family.

It is found in the cell membrane. Functionally, odorant receptor. This is Olfactory receptor 1M1 from Homo sapiens (Human).